Here is a 64-residue protein sequence, read N- to C-terminus: UPF0434 protein MADE_1009415 (64 aa).

This sequence belongs to the UPF0434 family.

The chain is UPF0434 protein MADE_1009415 from Alteromonas mediterranea (strain DSM 17117 / CIP 110805 / LMG 28347 / Deep ecotype).